The primary structure comprises 239 residues: Probable transcriptional regulatory protein ACL_0044 (239 aa).

This sequence belongs to the TACO1 family.

The protein localises to the cytoplasm. This chain is Probable transcriptional regulatory protein ACL_0044, found in Acholeplasma laidlawii (strain PG-8A).